A 350-amino-acid polypeptide reads, in one-letter code: Secreted effector protein PipB2 (350 aa).

Pentapeptide repeat domains follow at residues 162–201, 202–241, 247–286, and 287–326; these read ANLT…NLSG, ASLG…SLLG, CNCS…IMEG, and AVLT…TLTD.

Interacts with the host kinesin light chain (KLC), a subunit of the kinesin-1 motor complex.

The protein localises to the secreted. It localises to the host membrane. In terms of biological role, effector proteins function to alter host cell physiology and promote bacterial survival in host tissues. Involved in the reorganization of late endosome/lysosome (LE/Lys) compartments in mammalian cells. Necessary and sufficient to link kinesin-1 onto the Salmonella-containing vacuole (SCV) membrane. Required for centrifugal extension of lysosomal glycoprotein-rich membrane tubules, known as Salmonella-induced filaments (Sifs), away from the SCV and toward the cell periphery. Required for virulence, but not for intracellular survival and replication in phagocytic cells. This Salmonella typhi protein is Secreted effector protein PipB2 (pipB2).